Consider the following 328-residue polypeptide: ABC transporter I family member 20 (328 aa).

An ABC transporter domain is found at valine 14–glutamate 257. Glycine 55–threonine 62 lines the ATP pocket. The tract at residues glutamate 263–proline 295 is disordered. A compositionally biased stretch (basic and acidic residues) spans phenylalanine 282–valine 291.

Belongs to the ABC transporter superfamily. ABCI family.

Its subcellular location is the cytoplasm. The polypeptide is ABC transporter I family member 20 (ABCI20) (Arabidopsis thaliana (Mouse-ear cress)).